The chain runs to 37 residues: Large ribosomal subunit protein bL36 (37 aa).

This sequence belongs to the bacterial ribosomal protein bL36 family.

The sequence is that of Large ribosomal subunit protein bL36 from Histophilus somni (strain 129Pt) (Haemophilus somnus).